The following is a 747-amino-acid chain: Endoglucanase D (747 aa).

The N-terminal stretch at 1 to 39 (MHSASRTRARTRVRTAVSGLLAATVLAAPLTLVAAPAQA) is a signal peptide. The Proton donor role is filled by Glu208. Catalysis depends on Glu349, which acts as the Nucleophile. The segment at 456 to 475 (APTGLRAGTPTASTVPLTWS) is disordered. Fibronectin type-III domains follow at residues 456–543 (APTG…TAAG) and 552–639 (VPTG…TAPD). Residues 465–475 (PTASTVPLTWS) are compositionally biased toward polar residues. In terms of domain architecture, CBM2 spans 638-747 (PDPTTGSCAV…TVGGATCTTR (110 aa)).

This sequence belongs to the glycosyl hydrolase 5 (cellulase A) family.

The catalysed reaction is Endohydrolysis of (1-&gt;4)-beta-D-glucosidic linkages in cellulose, lichenin and cereal beta-D-glucans.. The protein operates within glycan metabolism; cellulose degradation. The protein is Endoglucanase D (cenD) of Cellulomonas fimi.